The sequence spans 185 residues: Ribosome-recycling factor (185 aa).

It belongs to the RRF family.

The protein resides in the cytoplasm. Its function is as follows. Responsible for the release of ribosomes from messenger RNA at the termination of protein biosynthesis. May increase the efficiency of translation by recycling ribosomes from one round of translation to another. The polypeptide is Ribosome-recycling factor (Nitrosomonas eutropha (strain DSM 101675 / C91 / Nm57)).